A 748-amino-acid chain; its full sequence is Elongation factor G, mitochondrial (748 aa).

The N-terminal 14 residues, 1-14 (MTISSFLRVRHSLA), are a transit peptide targeting the mitochondrion. The 279-residue stretch at 40–318 (ERIRNIGISA…VLNYLPHPGE (279 aa)) folds into the tr-type G domain. Residues 49-56 (AHIDSGKT), 116-120 (DTPGH), and 170-173 (NKLD) each bind GTP.

This sequence belongs to the TRAFAC class translation factor GTPase superfamily. Classic translation factor GTPase family. EF-G/EF-2 subfamily.

Its subcellular location is the mitochondrion. Its pathway is protein biosynthesis; polypeptide chain elongation. Mitochondrial GTPase that catalyzes the GTP-dependent ribosomal translocation step during translation elongation. During this step, the ribosome changes from the pre-translocational (PRE) to the post-translocational (POST) state as the newly formed A-site-bound peptidyl-tRNA and P-site-bound deacylated tRNA move to the P and E sites, respectively. Catalyzes the coordinated movement of the two tRNA molecules, the mRNA and conformational changes in the ribosome. In Aedes aegypti (Yellowfever mosquito), this protein is Elongation factor G, mitochondrial.